Reading from the N-terminus, the 481-residue chain is MLELSAFELAERVLAREVSASEAAAAANARVEEVEGDLNSFITGTPELALERAARVDERLRRGEEVRPWECVPIAVKDVLSTRGVRTTCGSRILENFEPVYEASALLSFGPDPIMVGKANMDEFAMGSSTENSAYGPTRNPWDLSRVPGGSSGGSAAAVAAGQGWWALGTDTGGSVRQPASFCGLVGLKPTYGRVSRYGLIAFASSLDQIGPMTRDVRDAALLLQAIAGHDPKDSTSAGVEVPDYLSGLERGVEGLRVGIVRELVEAEGVEGEVREISLRTARALEEAGARVGEVSLPHAGYGLPAYYIIAPAEVSSNLARYDGVRYGLRVPADGVHEMYRRTRERGFGDEVKRRIMLGTYALSAGYYEAYYGQAQKVRTRIIEDFRNAFSGYDVLLSPTCPTTAFGLGEKVDDPLAMYANDICAVPASLAGIPAISVPGGLSGGLPVGVQLMGDYFSEPTLLRAARAAEQASGLRFRLKP.

Active-site charge relay system residues include Lys-77 and Ser-151. Catalysis depends on Ser-175, which acts as the Acyl-ester intermediate.

The protein belongs to the amidase family. GatA subfamily. As to quaternary structure, heterotrimer of A, B and C subunits.

It carries out the reaction L-glutamyl-tRNA(Gln) + L-glutamine + ATP + H2O = L-glutaminyl-tRNA(Gln) + L-glutamate + ADP + phosphate + H(+). In terms of biological role, allows the formation of correctly charged Gln-tRNA(Gln) through the transamidation of misacylated Glu-tRNA(Gln) in organisms which lack glutaminyl-tRNA synthetase. The reaction takes place in the presence of glutamine and ATP through an activated gamma-phospho-Glu-tRNA(Gln). This is Glutamyl-tRNA(Gln) amidotransferase subunit A from Rubrobacter xylanophilus (strain DSM 9941 / JCM 11954 / NBRC 16129 / PRD-1).